We begin with the raw amino-acid sequence, 360 residues long: MYTLHYICLVLSCVIYFVWTLSCPTRNQYVSVKYVNLTNYSGPYPNGTTLHVTCREGYAKRPVQTVTCVNGNWTVPKKCQKKKCSTPQDLLNGRYTVTGNLYYGSVITYTCNSGYSLIGSTTSACLLKRGGRVDWTPRPPICDIKKCKPPPQIANGTHTNVKDFYTYLDTVTYSCNDETKLTLTGPSSKLCSETGSWVPNGETKCEFIFCKLPQVANAYVEVRKSATSMQYLHINVKCYKGFMLYGETPNTCNHGVWSPAIPECMKISSPKGDMPGINSNEDNSTPSGRICNGNCTTSMPTQTYTIITARYTSHIYFPTGKTYKLPRGVLVIILTTSFIIIGIILTGVCLHRCRVCMSGQ.

A signal peptide spans 1 to 20 (MYTLHYICLVLSCVIYFVWT). Sushi domains are found at residues 21–81 (LSCP…KCQK), 82–144 (KKCS…ICDI), 145–207 (KKCK…KCEF), and 208–266 (IFCK…ECMK). Intrachain disulfides connect cysteine 23/cysteine 68, cysteine 54/cysteine 79, cysteine 84/cysteine 125, cysteine 111/cysteine 142, cysteine 147/cysteine 191, cysteine 175/cysteine 205, cysteine 210/cysteine 252, and cysteine 238/cysteine 264. 4 N-linked (GlcNAc...) asparagine; by host glycosylation sites follow: asparagine 36, asparagine 39, asparagine 46, and asparagine 72. Asparagine 155 carries an N-linked (GlcNAc...) asparagine; by host glycan. The N-linked (GlcNAc...) asparagine; by host glycan is linked to asparagine 294. A helical transmembrane segment spans residues 328–350 (GVLVIILTTSFIIIGIILTGVCL).

This sequence belongs to the receptors of complement activation (RCA) family.

It is found in the membrane. The protein localises to the secreted. The protein is Complement control protein homolog (4) of Saimiriine herpesvirus 2 (strain 11) (SaHV-2).